Here is a 402-residue protein sequence, read N- to C-terminus: MDAATTRVGLTDLTFRLLRESFADAVSWVAKNLPARPAVPVLSGVLLTGSDNGLTISGFDYEVSAEAQVGAEIVSPGSVLVSGRLLSDITRALPNKPVDVHVEGNRVALTCGNARFSLPTMPVEDYPTLPTLPEETGLLPAELFAEAISQVAIAAGRDDTLPMLTGIRVEILGETVVLAATDRFRLAVRELKWSASSPDIEAAVLVPAKTLAEAAKAGIGGSDVRLSLGTGPGVGKDGLLGISGNGKRSTTRLLDAEFPKFRQLLPTEHTAVATMDVAELIEAIKLVALVADRGAQVRMEFADGSVRLSAGADDVGRAEEDLVVDYAGEPLTIAFNPTYLTDGLSSLRSERVSFGFTTAGKPALLRPVSGDDRPVAGLNGNGPFPAVSTDYVYLLMPVRLPG.

Belongs to the beta sliding clamp family. As to quaternary structure, forms a ring-shaped head-to-tail homodimer around DNA which binds and tethers DNA polymerases and other proteins to the DNA. The DNA replisome complex has a single clamp-loading complex (3 tau and 1 each of delta, delta', psi and chi subunits) which binds 3 Pol III cores (1 core on the leading strand and 2 on the lagging strand) each with a beta sliding clamp dimer. Additional proteins in the replisome are other copies of gamma, psi and chi, Ssb, DNA helicase and RNA primase.

The protein localises to the cytoplasm. Confers DNA tethering and processivity to DNA polymerases and other proteins. Acts as a clamp, forming a ring around DNA (a reaction catalyzed by the clamp-loading complex) which diffuses in an ATP-independent manner freely and bidirectionally along dsDNA. Initially characterized for its ability to contact the catalytic subunit of DNA polymerase III (Pol III), a complex, multichain enzyme responsible for most of the replicative synthesis in bacteria; Pol III exhibits 3'-5' exonuclease proofreading activity. The beta chain is required for initiation of replication as well as for processivity of DNA replication. The chain is Beta sliding clamp (dnaN) from Mycobacterium tuberculosis (strain CDC 1551 / Oshkosh).